A 179-amino-acid chain; its full sequence is Ribosome maturation factor RimM (179 aa).

A PRC barrel domain is found at Asp-97–Leu-170.

It belongs to the RimM family. Binds ribosomal protein uS19.

It localises to the cytoplasm. In terms of biological role, an accessory protein needed during the final step in the assembly of 30S ribosomal subunit, possibly for assembly of the head region. Essential for efficient processing of 16S rRNA. May be needed both before and after RbfA during the maturation of 16S rRNA. It has affinity for free ribosomal 30S subunits but not for 70S ribosomes. This Bacteroides thetaiotaomicron (strain ATCC 29148 / DSM 2079 / JCM 5827 / CCUG 10774 / NCTC 10582 / VPI-5482 / E50) protein is Ribosome maturation factor RimM.